Consider the following 146-residue polypeptide: UPF0260 protein Sden_1632 (146 aa).

It belongs to the UPF0260 family.

In Shewanella denitrificans (strain OS217 / ATCC BAA-1090 / DSM 15013), this protein is UPF0260 protein Sden_1632.